The following is a 247-amino-acid chain: Transmembrane protein 33 (247 aa).

A2 is subject to N-acetylalanine. At 2 to 31 (ADTTPNGPQGAGAVQFMMTNKLDTAMWLSR) the chain is on the lumenal side. A helical membrane pass occupies residues 32–52 (LFTVYCSALFVLPLLGLHEAA). Residues 53 to 100 (SFYQRALLANALTSALRLHQRLPHFQLSRAFLAQALLEDSCHYLLYSL) lie on the Cytoplasmic side of the membrane. Residues 101-121 (IFVNSYPVTMSIFPVLLFSLL) form a helical membrane-spanning segment. Residues 122–155 (HAATYTKKVLDARGSNSLPLLRSVLDKLSANQQN) lie on the Lumenal side of the membrane. The chain crosses the membrane as a helical span at residues 156-176 (ILKFIACNEIFLMPATVFMLF). Residues 177-247 (SGQGSLLQPF…FISRLAPTVP (71 aa)) lie on the Cytoplasmic side of the membrane.

Belongs to the PER33/POM33 family. In terms of assembly, interacts with EIF2AK3. Interacts with ARL6IP1, isoform RTN1-A of RTN1, isoform RTN2-B of RTN2, isoform 3 of RTN3 and isoform 3 of RTN4. Interacts with RNF5. Interacts with RNF26. Interacts with PKD2. As to expression, prostate cancer and several cancer cell lines (at protein level). Widely expressed. Expressed at higher levels in endocrine-resistant breast cancer cells as compared to endocrine-sensitive breast cancer cells. Expressed at higher levels in early recurrence breast cancer tissues as compared to non-recurrent breast tumors.

The protein localises to the endoplasmic reticulum membrane. Its subcellular location is the melanosome. It localises to the nucleus envelope. Acts as a regulator of the tubular endoplasmic reticulum (ER) network by modulating intracellular calcium homeostasis. Mechanistically, stimulates PKD2 calcium-dependent activity. Suppresses the RTN3/4-induced formation of the ER tubules. Positively regulates PERK-mediated and IRE1-mediated unfolded protein response signaling. Plays an essential role in VEGF-mediated release of Ca(2+) from ER stores during angiogenesis. Also plays a role in the modulation of innate immune signaling through the cGAS-STING pathway by interacting with RNF26. Participates in lipid metabolism by acting as a downstream effector of the pyruvate kinase/PKM. Forms a complex with RNF5 to facilitate polyubiquitination and subsequent degradation of SCAP on the ER membrane. The protein is Transmembrane protein 33 (TMEM33) of Homo sapiens (Human).